We begin with the raw amino-acid sequence, 193 residues long: Putative 3-methyladenine DNA glycosylase (193 aa).

It belongs to the DNA glycosylase MPG family.

This Francisella tularensis subsp. tularensis (strain FSC 198) protein is Putative 3-methyladenine DNA glycosylase.